A 239-amino-acid chain; its full sequence is DNA repair protein RecO (239 aa).

This sequence belongs to the RecO family.

Its function is as follows. Involved in DNA repair and RecF pathway recombination. In Bifidobacterium longum (strain DJO10A), this protein is DNA repair protein RecO.